Here is a 447-residue protein sequence, read N- to C-terminus: ATP-dependent protease ATPase subunit HslU (447 aa).

Residues Ile-18, 60 to 65 (GVGKTE), Asp-259, Glu-325, and Arg-397 each bind ATP.

This sequence belongs to the ClpX chaperone family. HslU subfamily. In terms of assembly, a double ring-shaped homohexamer of HslV is capped on each side by a ring-shaped HslU homohexamer. The assembly of the HslU/HslV complex is dependent on binding of ATP.

It localises to the cytoplasm. ATPase subunit of a proteasome-like degradation complex; this subunit has chaperone activity. The binding of ATP and its subsequent hydrolysis by HslU are essential for unfolding of protein substrates subsequently hydrolyzed by HslV. HslU recognizes the N-terminal part of its protein substrates and unfolds these before they are guided to HslV for hydrolysis. This chain is ATP-dependent protease ATPase subunit HslU, found in Burkholderia ambifaria (strain ATCC BAA-244 / DSM 16087 / CCUG 44356 / LMG 19182 / AMMD) (Burkholderia cepacia (strain AMMD)).